The sequence spans 247 residues: Type III pantothenate kinase (247 aa).

An ATP-binding site is contributed by 7 to 14 (AIGNSRWH). Residues Tyr91 and 95 to 98 (GLDR) contribute to the substrate site. Asp97 serves as the catalytic Proton acceptor. Asp117 provides a ligand contact to K(+). Thr120 contributes to the ATP binding site.

It belongs to the type III pantothenate kinase family. In terms of assembly, homodimer. NH4(+) serves as cofactor. K(+) is required as a cofactor.

The protein resides in the cytoplasm. It carries out the reaction (R)-pantothenate + ATP = (R)-4'-phosphopantothenate + ADP + H(+). Its pathway is cofactor biosynthesis; coenzyme A biosynthesis; CoA from (R)-pantothenate: step 1/5. Catalyzes the phosphorylation of pantothenate (Pan), the first step in CoA biosynthesis. The chain is Type III pantothenate kinase from Synechococcus sp. (strain ATCC 27144 / PCC 6301 / SAUG 1402/1) (Anacystis nidulans).